Consider the following 188-residue polypeptide: RxLR effector protein Avh241 (188 aa).

The first 16 residues, 1–16 (MRQYCLLLIVLALAAA), serve as a signal peptide directing secretion. A RxLR-dEER motif is present at residues 43-58 (RLLRSEPQDEDTFEDR). The Host plasma membrane localization motif signature appears at 73-78 (GAAKAK).

This sequence belongs to the RxLR effector family.

It is found in the secreted. Its subcellular location is the host cell membrane. In terms of biological role, effector that triggers cell death in a variety of plant species (including tobacco, tomato and soybean), regardless of the Rps genes present. Avh241 interacts with the plant immune system via at least two different mechanisms, one recognized by plants dependent on subcellular localization and one promoting infection independent on membrane localization. The cell death triggered by Avh241 in N.benthamiana requires the two host mitogen-activated protein kinases, MEK2 and WIPK. In Phytophthora sojae (strain P6497) (Soybean stem and root rot agent), this protein is RxLR effector protein Avh241.